A 463-amino-acid chain; its full sequence is L-seryl-tRNA(Sec) selenium transferase (463 aa).

K295 is subject to N6-(pyridoxal phosphate)lysine.

This sequence belongs to the SelA family. Homodecamer; pentamer of dimers. Binds only one seryl-tRNA(Sec) per dimer. It depends on pyridoxal 5'-phosphate as a cofactor.

It localises to the cytoplasm. The enzyme catalyses L-seryl-tRNA(Sec) + selenophosphate + H(+) = L-selenocysteinyl-tRNA(Sec) + phosphate. Its pathway is aminoacyl-tRNA biosynthesis; selenocysteinyl-tRNA(Sec) biosynthesis; selenocysteinyl-tRNA(Sec) from L-seryl-tRNA(Sec) (bacterial route): step 1/1. In terms of biological role, converts seryl-tRNA(Sec) to selenocysteinyl-tRNA(Sec) required for selenoprotein biosynthesis. In Escherichia fergusonii (strain ATCC 35469 / DSM 13698 / CCUG 18766 / IAM 14443 / JCM 21226 / LMG 7866 / NBRC 102419 / NCTC 12128 / CDC 0568-73), this protein is L-seryl-tRNA(Sec) selenium transferase.